A 95-amino-acid polypeptide reads, in one-letter code: Auxin-responsive protein SAUR27 (95 aa).

It belongs to the ARG7 family. As to quaternary structure, interacts with PP2C-D1. In terms of tissue distribution, higher expression in thermo-responsive cultivars (e.g. cv. Alst-1, cv. Ang-0 and cv. Com-0) than in low thermo-responsive cultivars (e.g. cv. Dja-1, cv. El-0 and cv. Kon).

Its subcellular location is the cell membrane. Its function is as follows. Functions as a positive effector of cell expansion through modulation of auxin transport. Involved in thermo-responsiveness of plant architecture. Enhances plasma membrane H(+)-ATPase. This chain is Auxin-responsive protein SAUR27, found in Arabidopsis thaliana (Mouse-ear cress).